A 203-amino-acid polypeptide reads, in one-letter code: Guanylate kinase (203 aa).

Positions 3–181 (GTLYIVAAPS…AVAEMCAIFT (179 aa)) constitute a Guanylate kinase-like domain. Residue 10-17 (APSGAGKS) coordinates ATP.

The protein belongs to the guanylate kinase family.

It localises to the cytoplasm. The enzyme catalyses GMP + ATP = GDP + ADP. Its function is as follows. Essential for recycling GMP and indirectly, cGMP. The protein is Guanylate kinase of Xanthomonas euvesicatoria pv. vesicatoria (strain 85-10) (Xanthomonas campestris pv. vesicatoria).